The chain runs to 294 residues: Acetyl-coenzyme A carboxylase carboxyl transferase subunit beta (294 aa).

A CoA carboxyltransferase N-terminal domain is found at 30-294; sequence IMTKCPECKK…PETGGESDGE (265 aa). 4 residues coordinate Zn(2+): Cys-34, Cys-37, Cys-53, and Cys-56. The segment at 34-56 adopts a C4-type zinc-finger fold; the sequence is CPECKKIMYTKELQKNLMVCNYC.

It belongs to the AccD/PCCB family. In terms of assembly, acetyl-CoA carboxylase is a heterohexamer composed of biotin carboxyl carrier protein (AccB), biotin carboxylase (AccC) and two subunits each of ACCase subunit alpha (AccA) and ACCase subunit beta (AccD). Requires Zn(2+) as cofactor.

It localises to the cytoplasm. It catalyses the reaction N(6)-carboxybiotinyl-L-lysyl-[protein] + acetyl-CoA = N(6)-biotinyl-L-lysyl-[protein] + malonyl-CoA. The protein operates within lipid metabolism; malonyl-CoA biosynthesis; malonyl-CoA from acetyl-CoA: step 1/1. In terms of biological role, component of the acetyl coenzyme A carboxylase (ACC) complex. Biotin carboxylase (BC) catalyzes the carboxylation of biotin on its carrier protein (BCCP) and then the CO(2) group is transferred by the transcarboxylase to acetyl-CoA to form malonyl-CoA. This Listeria welshimeri serovar 6b (strain ATCC 35897 / DSM 20650 / CCUG 15529 / CIP 8149 / NCTC 11857 / SLCC 5334 / V8) protein is Acetyl-coenzyme A carboxylase carboxyl transferase subunit beta.